The sequence spans 133 residues: Protein NrdI (133 aa).

Belongs to the NrdI family.

Its function is as follows. Probably involved in ribonucleotide reductase function. In Cronobacter sakazakii (strain ATCC BAA-894) (Enterobacter sakazakii), this protein is Protein NrdI.